The chain runs to 238 residues: ATP synthase subunit a (238 aa).

4 consecutive transmembrane segments (helical) span residues 17 to 37, 80 to 100, 112 to 132, and 194 to 214; these read LSNI…AIIC, ITLL…QIAI, DPIV…YYGI, and IFVG…SIFI.

This sequence belongs to the ATPase A chain family. F-type ATPases have 2 components, CF(1) - the catalytic core - and CF(0) - the membrane proton channel. CF(1) has five subunits: alpha(3), beta(3), gamma(1), delta(1), epsilon(1). CF(0) has three main subunits: a(1), b(2) and c(9-12). The alpha and beta chains form an alternating ring which encloses part of the gamma chain. CF(1) is attached to CF(0) by a central stalk formed by the gamma and epsilon chains, while a peripheral stalk is formed by the delta and b chains.

It localises to the cell membrane. Its function is as follows. Key component of the proton channel; it plays a direct role in the translocation of protons across the membrane. The sequence is that of ATP synthase subunit a from Listeria welshimeri serovar 6b (strain ATCC 35897 / DSM 20650 / CCUG 15529 / CIP 8149 / NCTC 11857 / SLCC 5334 / V8).